Here is a 202-residue protein sequence, read N- to C-terminus: uncharacterized protein (202 aa).

The first 19 residues, 1-19, serve as a signal peptide directing secretion; that stretch reads MRRKNGFSVASVFILCSIA. A helical transmembrane segment spans residues 177–199; sequence FLASSSSSFSSFLPSIAIILFFV.

Its subcellular location is the membrane. This is an uncharacterized protein from Caenorhabditis elegans.